We begin with the raw amino-acid sequence, 538 residues long: UPF0761 membrane protein PsycPRwf_0630 (538 aa).

6 consecutive transmembrane segments (helical) span residues 43–63, 100–120, 143–163, 183–203, 215–235, and 247–267; these read LLSI…VPAL, LTAI…TTIE, WTII…SSAV, WVQV…YWFI, IAGV…GIIM, and AFAA…LILL. Residues 427-538 are disordered; sequence SVFSAQDADA…IITEDDNPNK (112 aa). Positions 482-493 are enriched in low complexity; that stretch reads PPDADIKAAAAK. Basic and acidic residues predominate over residues 503 to 514; that stretch reads KHTETAKQEHKK.

The protein belongs to the UPF0761 family.

It localises to the cell inner membrane. The sequence is that of UPF0761 membrane protein PsycPRwf_0630 from Psychrobacter sp. (strain PRwf-1).